Reading from the N-terminus, the 208-residue chain is Kinetochore protein Spc25 (208 aa).

Residues 31–101 (SKIAAKHQLI…KKQRRDELMG (71 aa)) are a coiled coil.

The protein belongs to the SPC25 family. As to quaternary structure, component of the Ndc80 complex, which is composed of Ndc80, Nuf2 and Spc25.

It is found in the nucleus. Its subcellular location is the chromosome. The protein resides in the centromere. It localises to the kinetochore. Acts as a component of the essential kinetochore-associated Ndc80 complex, which is required for chromosome segregation and spindle checkpoint activity during meiosis and mitosis. Required for kinetochore integrity and the organization of stable microtubule binding sites in the outer plate of the kinetochore. Participates in SAC signaling that responds specifically to disruptions in spindle microtubule dynamics. The NDC80 complex synergistically enhances the affinity of the SKA1 complex for microtubules and may allow the NDC80 complex to track depolymerizing microtubules. The protein is Kinetochore protein Spc25 of Drosophila mojavensis (Fruit fly).